The following is a 2280-amino-acid chain: Protein Ycf2 (2280 aa).

An ATP-binding site is contributed by 1631 to 1638 (GSIGTGRS).

This sequence belongs to the Ycf2 family.

It localises to the plastid. The protein resides in the chloroplast stroma. Probable ATPase of unknown function. Its presence in a non-photosynthetic plant (Epifagus virginiana) and experiments in tobacco indicate that it has an essential function which is probably not related to photosynthesis. This chain is Protein Ycf2 (ycf2-A), found in Nicotiana tabacum (Common tobacco).